Here is a 1102-residue protein sequence, read N- to C-terminus: Carbamoyl phosphate synthase large chain (1102 aa).

Residues 1 to 402 are carboxyphosphate synthetic domain; it reads MPKRTDLKSV…ALQKALRSLE (402 aa). 12 residues coordinate ATP: R129, R169, G175, G176, E208, I210, E215, G241, V242, H243, Q285, and E299. Residues 133-328 form the ATP-grasp 1 domain; that stretch reads KGVVERCGAE…IAKIATKLSL (196 aa). Residues Q285, E299, and N301 each coordinate Mg(2+). Residues Q285, E299, and N301 each contribute to the Mn(2+) site. An oligomerization domain region spans residues 403–546; it reads QKGSQLDFSS…YHYSSYDEED (144 aa). Residues 547 to 950 are carbamoyl phosphate synthetic domain; it reads EVGLHAKPSV…AFAKSQAAAN (404 aa). One can recognise an ATP-grasp 2 domain in the interval 677 to 868; the sequence is ARVLDEAGLT…MAKAAALIGT (192 aa). ATP-binding residues include R713, R752, L754, E759, G784, I785, H786, S787, Q827, and E839. Positions 827, 839, and 841 each coordinate Mg(2+). Residues Q827, E839, and N841 each coordinate Mn(2+). One can recognise an MGS-like domain in the interval 951–1096; the sequence is NALPTEGKIF…QEHAANLSAA (146 aa). Positions 951–1102 are allosteric domain; that stretch reads NALPTEGKIF…LSAAMEAANA (152 aa).

Belongs to the CarB family. In terms of assembly, composed of two chains; the small (or glutamine) chain promotes the hydrolysis of glutamine to ammonia, which is used by the large (or ammonia) chain to synthesize carbamoyl phosphate. Tetramer of heterodimers (alpha,beta)4. It depends on Mg(2+) as a cofactor. Mn(2+) is required as a cofactor.

The enzyme catalyses hydrogencarbonate + L-glutamine + 2 ATP + H2O = carbamoyl phosphate + L-glutamate + 2 ADP + phosphate + 2 H(+). The catalysed reaction is hydrogencarbonate + NH4(+) + 2 ATP = carbamoyl phosphate + 2 ADP + phosphate + 2 H(+). Its pathway is amino-acid biosynthesis; L-arginine biosynthesis; carbamoyl phosphate from bicarbonate: step 1/1. The protein operates within pyrimidine metabolism; UMP biosynthesis via de novo pathway; (S)-dihydroorotate from bicarbonate: step 1/3. Large subunit of the glutamine-dependent carbamoyl phosphate synthetase (CPSase). CPSase catalyzes the formation of carbamoyl phosphate from the ammonia moiety of glutamine, carbonate, and phosphate donated by ATP, constituting the first step of 2 biosynthetic pathways, one leading to arginine and/or urea and the other to pyrimidine nucleotides. The large subunit (synthetase) binds the substrates ammonia (free or transferred from glutamine from the small subunit), hydrogencarbonate and ATP and carries out an ATP-coupled ligase reaction, activating hydrogencarbonate by forming carboxy phosphate which reacts with ammonia to form carbamoyl phosphate. This is Carbamoyl phosphate synthase large chain from Paenarthrobacter aurescens (strain TC1).